The chain runs to 671 residues: Protein KHNYN (671 aa).

4 disordered regions span residues 234 to 274 (RVAG…LSGE), 294 to 327 (EVAP…AHVP), 344 to 402 (HNGS…GGNL), and 577 to 626 (GPTL…RKTR). A compositionally biased stretch (basic and acidic residues) spans 250–272 (TVEKEERKQDAVRDMGSGRKELS). The segment covering 351–365 (PRVPSPPPAPEPPWP) has biased composition (pro residues). The residue at position 355 (S355) is a Phosphoserine. Over residues 367 to 381 (GDRDRDRDRGDRGDK) the composition is skewed to basic and acidic residues. Residues 430–582 (LRHIVIDGSN…LGRNGPTLDE (153 aa)) enclose the RNase NYN domain. Positions 591 to 612 (QGSSKTQQPSKGSTEQANQQQG) are enriched in polar residues.

Belongs to the N4BP1 family.

This chain is Protein KHNYN (Khnyn), found in Mus musculus (Mouse).